Reading from the N-terminus, the 491-residue chain is Probable cytosol aminopeptidase (491 aa).

The Mn(2+) site is built by Lys-263 and Asp-268. Residue Lys-275 is part of the active site. Mn(2+) is bound by residues Asp-286, Asp-345, and Glu-347. Residue Arg-349 is part of the active site.

The protein belongs to the peptidase M17 family. Mn(2+) is required as a cofactor.

The protein localises to the cytoplasm. The enzyme catalyses Release of an N-terminal amino acid, Xaa-|-Yaa-, in which Xaa is preferably Leu, but may be other amino acids including Pro although not Arg or Lys, and Yaa may be Pro. Amino acid amides and methyl esters are also readily hydrolyzed, but rates on arylamides are exceedingly low.. It catalyses the reaction Release of an N-terminal amino acid, preferentially leucine, but not glutamic or aspartic acids.. Functionally, presumably involved in the processing and regular turnover of intracellular proteins. Catalyzes the removal of unsubstituted N-terminal amino acids from various peptides. This is Probable cytosol aminopeptidase from Haemophilus influenzae (strain PittGG).